A 2200-amino-acid polypeptide reads, in one-letter code: Bromodomain and WD repeat-containing DDB_G0285837 (2200 aa).

3 disordered regions span residues 137–178 (GFND…SNTN), 194–245 (VTPT…TTPP), and 259–288 (DIQQ…NNNN). Composition is skewed to low complexity over residues 161–176 (NNNN…SNSN), 203–242 (NTTN…TTLT), and 259–273 (DIQQ…QQQQ). WD repeat units lie at residues 352 to 391 (GHKA…LIAT), 394 to 433 (GHLG…YDSI), 442 to 483 (SVNN…HVIS), 548 to 586 (GKTN…PKLV), 591 to 630 (GHPT…KWDH), 653 to 691 (RSKA…FHLE), 694 to 736 (EHTS…KKFV), and 741 to 780 (GFQC…DINN). 2 stretches are compositionally biased toward acidic residues: residues 918–933 (DDEI…EDFN) and 955–968 (QDDD…EDYD). 4 disordered regions span residues 918 to 1180 (DDEI…NHLT), 1262 to 1297 (NNNN…DDDD), 1461 to 1538 (ENNQ…NNNN), and 1662 to 1703 (NFNS…NNNN). Positions 974-1000 (MSTRKKSKIKADKRKKRLLKQSKKFTR) are enriched in basic residues. Residues 1052 to 1074 (GEIEMDDDDQYLNDNILDSDDND) show a composition bias toward acidic residues. Positions 1109–1132 (SSDNSSENDSSANGSDSDYSGSKS) are enriched in low complexity. Positions 1133–1164 (NKNKRGDKSKRNKKGKKNVKNKKVQKRGRKKS) are enriched in basic residues. Low complexity-rich tracts occupy residues 1262–1292 (NNNN…QQIN) and 1461–1525 (ENNQ…NSLN). The region spanning 1722 to 1823 (EKIENLKKEM…HRISDILKEA (102 aa)) is the Bromo domain. The interval 1850–2200 (DKDDSQLDDE…RGRGRPPKSN (351 aa)) is disordered. Residues 1878-1888 (LANNNHGNNKS) are compositionally biased toward low complexity. Residues 1910–1920 (TGKNITRSLLS) show a composition bias toward polar residues. Residues 1945 to 1958 (TTTTTTTTTTTSST) show a composition bias toward low complexity. Composition is skewed to acidic residues over residues 2016 to 2028 (DYND…DNDG), 2057 to 2073 (EDED…EEDY), and 2104 to 2113 (SEEEEDEDQS). The segment covering 2114-2124 (DVNSNNNSDNE) has biased composition (low complexity). The span at 2125–2138 (SGGEDGYSGEDGSE) shows a compositional bias: acidic residues. Residues 2170-2185 (SFKNNNNNNNINNNVN) show a composition bias toward low complexity. Over residues 2190–2200 (KRGRGRPPKSN) the composition is skewed to basic residues.

This Dictyostelium discoideum (Social amoeba) protein is Bromodomain and WD repeat-containing DDB_G0285837.